A 64-amino-acid chain; its full sequence is Large ribosomal subunit protein bL28 (64 aa).

The interval 1-27 (MAKRDQLTGKGPLSGNTRSHAMNHSKR) is disordered.

This sequence belongs to the bacterial ribosomal protein bL28 family.

The protein is Large ribosomal subunit protein bL28 of Ureaplasma parvum serovar 3 (strain ATCC 27815 / 27 / NCTC 11736).